Consider the following 266-residue polypeptide: 4-hydroxy-tetrahydrodipicolinate reductase (266 aa).

Position 11-16 (11-16 (GALGKM)) interacts with NAD(+). Lysine 39 contributes to the NADP(+) binding site. 100-102 (GTT) is a binding site for NAD(+). The active-site Proton donor/acceptor is histidine 156. A (S)-2,3,4,5-tetrahydrodipicolinate-binding site is contributed by histidine 157. The active-site Proton donor is lysine 160. Position 166–167 (166–167 (GT)) interacts with (S)-2,3,4,5-tetrahydrodipicolinate.

The protein belongs to the DapB family.

The protein resides in the cytoplasm. The enzyme catalyses (S)-2,3,4,5-tetrahydrodipicolinate + NAD(+) + H2O = (2S,4S)-4-hydroxy-2,3,4,5-tetrahydrodipicolinate + NADH + H(+). It carries out the reaction (S)-2,3,4,5-tetrahydrodipicolinate + NADP(+) + H2O = (2S,4S)-4-hydroxy-2,3,4,5-tetrahydrodipicolinate + NADPH + H(+). Its pathway is amino-acid biosynthesis; L-lysine biosynthesis via DAP pathway; (S)-tetrahydrodipicolinate from L-aspartate: step 4/4. In terms of biological role, catalyzes the conversion of 4-hydroxy-tetrahydrodipicolinate (HTPA) to tetrahydrodipicolinate. In Syntrophomonas wolfei subsp. wolfei (strain DSM 2245B / Goettingen), this protein is 4-hydroxy-tetrahydrodipicolinate reductase.